The primary structure comprises 325 residues: Large ribosomal subunit protein uL4m (325 aa).

The interval 113–158 (ASTKTRYEVHGSHKKMSPQKGTGNARRGTRQSPLMKGGGKTFGPKP) is disordered.

The protein belongs to the universal ribosomal protein uL4 family. As to quaternary structure, component of the mitochondrial large ribosomal subunit (mt-LSU). Mature N.crassa 74S mitochondrial ribosomes consist of a small (37S) and a large (54S) subunit. The 37S small subunit contains a 16S ribosomal RNA (16S mt-rRNA) and 32 different proteins. The 54S large subunit contains a 23S rRNA (23S mt-rRNA) and 42 different proteins.

It localises to the mitochondrion. In terms of biological role, component of the mitochondrial ribosome (mitoribosome), a dedicated translation machinery responsible for the synthesis of mitochondrial genome-encoded proteins, including at least some of the essential transmembrane subunits of the mitochondrial respiratory chain. The mitoribosomes are attached to the mitochondrial inner membrane and translation products are cotranslationally integrated into the membrane. The protein is Large ribosomal subunit protein uL4m (yml6) of Neurospora crassa (strain ATCC 24698 / 74-OR23-1A / CBS 708.71 / DSM 1257 / FGSC 987).